A 239-amino-acid polypeptide reads, in one-letter code: Putative glutamine amidotransferase-like protein YfeJ (239 aa).

The region spanning 1 to 200 is the Glutamine amidotransferase type-1 domain; sequence MRVHFVVHES…IQHSQQELAD (200 aa).

This Salmonella typhimurium (strain LT2 / SGSC1412 / ATCC 700720) protein is Putative glutamine amidotransferase-like protein YfeJ (yfeJ).